A 251-amino-acid chain; its full sequence is Imidazole glycerol phosphate synthase subunit HisF (251 aa).

Active-site residues include D11 and D130.

Belongs to the HisA/HisF family. In terms of assembly, heterodimer of HisH and HisF.

It is found in the cytoplasm. The enzyme catalyses 5-[(5-phospho-1-deoxy-D-ribulos-1-ylimino)methylamino]-1-(5-phospho-beta-D-ribosyl)imidazole-4-carboxamide + L-glutamine = D-erythro-1-(imidazol-4-yl)glycerol 3-phosphate + 5-amino-1-(5-phospho-beta-D-ribosyl)imidazole-4-carboxamide + L-glutamate + H(+). It participates in amino-acid biosynthesis; L-histidine biosynthesis; L-histidine from 5-phospho-alpha-D-ribose 1-diphosphate: step 5/9. Functionally, IGPS catalyzes the conversion of PRFAR and glutamine to IGP, AICAR and glutamate. The HisF subunit catalyzes the cyclization activity that produces IGP and AICAR from PRFAR using the ammonia provided by the HisH subunit. The chain is Imidazole glycerol phosphate synthase subunit HisF from Parabacteroides distasonis (strain ATCC 8503 / DSM 20701 / CIP 104284 / JCM 5825 / NCTC 11152).